We begin with the raw amino-acid sequence, 295 residues long: Sulfotransferase 1 family member D1 (295 aa).

Residue 48 to 53 (KSGTTW) coordinates 3'-phosphoadenylyl sulfate. Residues phenylalanine 81 and 106-108 (KTH) contribute to the substrate site. The active-site Proton acceptor is the histidine 108. 3'-phosphoadenylyl sulfate-binding residues include arginine 130 and serine 138. Phenylalanine 142 provides a ligand contact to substrate. Residues tyrosine 193, 227–232 (SSFSVM), and 257–259 (RKG) each bind 3'-phosphoadenylyl sulfate.

The protein belongs to the sulfotransferase 1 family. In terms of tissue distribution, detected in kidney and liver. Detected in kidney collecting duct cells.

It localises to the cytoplasm. Sulfotransferase with broad substrate specificity that utilizes 3'-phospho-5'-adenylyl sulfate (PAPS) as sulfonate donor to catalyze the sulfate conjugation of catecholamines, such as dopamine, prostaglandins, leukotriene E4, drugs and xenobiotic compounds. Has sulfotransferase activity towards p-nitrophenol, 2-naphthylamine and minoxidil (in vitro). Sulfonation increases the water solubility of most compounds, and therefore their renal excretion, but it can also result in bioactivation to form active metabolites. This Mus musculus (Mouse) protein is Sulfotransferase 1 family member D1 (Sult1d1).